Consider the following 2542-residue polypeptide: Probable polyketide synthase 41 (2542 aa).

Residues 11–441 form the Ketosynthase family 3 (KS3) domain; it reads CNKVAIIGIG…GSNCCLIVSS (431 aa). Catalysis depends on for beta-ketoacyl synthase activity residues Cys-177, His-318, and His-360. Residues 628–661 form an acyl/malonyl transferase region; that stretch reads GIKPSIIVGHSLGEISSSYCSGMIDLDTFCYLIY. Ser-638 acts as the For acyl/malonyl transferase activity in catalysis. The segment at 926 to 1059 is N-terminal hotdog fold; that stretch reads INHLGISNSN…ANFQLFSRGP (134 aa). Positions 926 to 1231 constitute a PKS/mFAS DH domain; it reads INHLGISNSN…FKSTTKIKDP (306 aa). His-959 (proton acceptor; for dehydratase activity) is an active-site residue. Residues 1083–1231 form a C-terminal hotdog fold region; it reads NLTKLSKQEL…FKSTTKIKDP (149 aa). Asp-1145 acts as the Proton donor; for dehydratase activity in catalysis. The Carrier domain occupies 2459-2537; sequence NVELTVDQLI…SFIQLVKNSM (79 aa). Residue Ser-2496 is modified to O-(pantetheine 4'-phosphoryl)serine.

The cofactor is pantetheine 4'-phosphate.

In terms of biological role, probable polyketide synthase. The sequence is that of Probable polyketide synthase 41 (pks41) from Dictyostelium discoideum (Social amoeba).